Consider the following 78-residue polypeptide: Small ribosomal subunit protein bS18 (78 aa).

This sequence belongs to the bacterial ribosomal protein bS18 family. Part of the 30S ribosomal subunit. Forms a tight heterodimer with protein bS6.

In terms of biological role, binds as a heterodimer with protein bS6 to the central domain of the 16S rRNA, where it helps stabilize the platform of the 30S subunit. The polypeptide is Small ribosomal subunit protein bS18 (Parafrankia sp. (strain EAN1pec)).